The sequence spans 163 residues: MHCPFCRHDDSRVVDSRTTDDGSSIRRRRQCPNCSKRFSTVETASLSVIKRSGAPEPFSRAKIASGVRKACQGRPVSEDDIALLAHRVEEAVRAQGAAEIDAHQVGLATLPFLQELDEVAYLRFASVYQAFDSLADFESAIDRLRAQRAAVAVPPVEPVAARG.

A zinc finger spans residues 3-34 (CPFCRHDDSRVVDSRTTDDGSSIRRRRQCPNC). Residues 46–136 (LSVIKRSGAP…VYQAFDSLAD (91 aa)) form the ATP-cone domain.

Belongs to the NrdR family. Zn(2+) serves as cofactor.

In terms of biological role, negatively regulates transcription of bacterial ribonucleotide reductase nrd genes and operons by binding to NrdR-boxes. This chain is Transcriptional repressor NrdR, found in Kineococcus radiotolerans (strain ATCC BAA-149 / DSM 14245 / SRS30216).